A 40-amino-acid polypeptide reads, in one-letter code: Photosystem II reaction center protein Y (40 aa).

Residues 5-23 (LVLVASPILLAVGWAGFNI) form a helical membrane-spanning segment.

This sequence belongs to the PsbY family. As to quaternary structure, PSII is composed of 1 copy each of membrane proteins PsbA, PsbB, PsbC, PsbD, PsbE, PsbF, PsbH, PsbI, PsbJ, PsbK, PsbL, PsbM, PsbT, PsbX, PsbY, PsbZ, Psb30/Ycf12, peripheral proteins PsbO, CyanoQ (PsbQ), PsbU, PsbV and a large number of cofactors. It forms dimeric complexes.

The protein resides in the cellular thylakoid membrane. In terms of biological role, loosely associated component of the core of photosystem II (PSII), it is not always seen in crystals. PSII is a light-driven water plastoquinone oxidoreductase, using light energy to abstract electrons from H(2)O, generating a proton gradient subsequently used for ATP formation. This chain is Photosystem II reaction center protein Y, found in Synechococcus sp. (strain RCC307).